A 207-amino-acid chain; its full sequence is Guanylate kinase (207 aa).

One can recognise a Guanylate kinase-like domain in the interval 6 to 185 (GLLIVLSGPS…AKERIQSIVE (180 aa)). 13–20 (GPSGVGKG) is a binding site for ATP.

Belongs to the guanylate kinase family.

Its subcellular location is the cytoplasm. The enzyme catalyses GMP + ATP = GDP + ADP. Essential for recycling GMP and indirectly, cGMP. The polypeptide is Guanylate kinase (Staphylococcus haemolyticus (strain JCSC1435)).